We begin with the raw amino-acid sequence, 454 residues long: Signal recognition particle protein (454 aa).

GTP contacts are provided by residues glycine 102–threonine 109, aspartate 184–arginine 188, and threonine 242–aspartate 245.

The protein belongs to the GTP-binding SRP family. SRP54 subfamily. Part of the signal recognition particle protein translocation system, which is composed of SRP and FtsY.

Its subcellular location is the cytoplasm. It carries out the reaction GTP + H2O = GDP + phosphate + H(+). In terms of biological role, involved in targeting and insertion of nascent membrane proteins into the cytoplasmic membrane. Binds to the hydrophobic signal sequence of the ribosome-nascent chain (RNC) as it emerges from the ribosomes. The SRP-RNC complex is then targeted to the cytoplasmic membrane where it interacts with the SRP receptor FtsY. This is Signal recognition particle protein from Aquifex aeolicus (strain VF5).